A 44-amino-acid polypeptide reads, in one-letter code: Mu-conotoxin-like Cal 12.1.2f (44 aa).

Cystine bridges form between cysteine 3–cysteine 15, cysteine 10–cysteine 27, cysteine 17–cysteine 32, and cysteine 26–cysteine 38. Tryptophan 16 is subject to 6'-bromotryptophan. Proline 22 is subject to 4-hydroxyproline. Tryptophan 36 and tryptophan 37 each carry 6'-bromotryptophan. Proline 39 bears the 4-hydroxyproline mark. Tryptophan 43 is modified (6'-bromotryptophan).

As to expression, expressed by the venom duct.

Its subcellular location is the secreted. Mu-conotoxins block voltage-gated sodium channels. This toxin reversibly blocks voltage-gated sodium channel in cephalopods, with no alteration in the voltage dependence of sodium conductance or on the kinetics of inactivation. This Californiconus californicus (California cone) protein is Mu-conotoxin-like Cal 12.1.2f.